We begin with the raw amino-acid sequence, 204 residues long: MTSPWSACPVQFPQPSISGLSQITKSLFISNGAAANDKLLLSSNQITTVINVSVEVANTFYEDIQYVQVPVVDAPIARLSDFFDPIADHIHSVEMKQGRTLLHCAAGVSRSAALCLAYLMKYHVMSLLDAHAWTKSRRPIIRPNSGFWEQLIHYEFQLFGKNTMQMVNSPMGLIPDIYEKETRMMIPLSTPDGAFHKGKEKALL.

One can recognise a Tyrosine-protein phosphatase domain in the interval 19-160 (GLSQITKSLF…LIHYEFQLFG (142 aa)). Positions 95-141 (MKQGRTLLHCAAGVSRSAALCLAYLMKYHVMSLLDAHAWTKSRRPII) are sufficient for mitochondrial localization. The Phosphocysteine intermediate role is filled by Cys-104.

It belongs to the protein-tyrosine phosphatase family. Non-receptor class dual specificity subfamily.

The protein localises to the cytoplasm. It is found in the nucleus. Its subcellular location is the mitochondrion inner membrane. It carries out the reaction O-phospho-L-tyrosyl-[protein] + H2O = L-tyrosyl-[protein] + phosphate. The enzyme catalyses O-phospho-L-seryl-[protein] + H2O = L-seryl-[protein] + phosphate. It catalyses the reaction O-phospho-L-threonyl-[protein] + H2O = L-threonyl-[protein] + phosphate. In terms of biological role, can dephosphorylate single and diphosphorylated synthetic MAPK peptides, with preference for the phosphotyrosine and diphosphorylated forms over phosphothreonine. In vitro, dephosphorylates p-nitrophenyl phosphate (pNPP). This Rattus norvegicus (Rat) protein is Dual specificity protein phosphatase 18 (Dusp18).